A 176-amino-acid chain; its full sequence is Oxaleimides biosynthesis cluster protein N (176 aa).

The next 4 membrane-spanning stretches (helical) occupy residues 5-25 (LLVVSAGSLALKVLRVTPLIT), 71-91 (VWTGVISIVLFTRVALILNLF), 104-124 (FLYGVGLFLSFAHLSVAPKML), and 155-175 (FWIVDVPFWVVGVWATLEGLK).

The protein resides in the membrane. The protein operates within secondary metabolite biosynthesis. Functionally, part of the gene cluster that mediates the biosynthesis of oxaleimides, cytotoxic compounds containing an unusual disubstituted succinimide moiety. The first step of the pathway is provided by the HR-PKS poxF that serves in a new mode of collaborative biosynthesis with the PKS-NRPS poxE, by providing the olefin containing amino acid substrate via the synthesis of an ACP-bound dec-4-enoate. The cytochrome P450 monooxygenase poxM-catalyzed oxidation at the alpha-position creates the enzyme-bound 2-hydroxydec-4-enoyl-ACP thioester, which may be prone to spontaneous hydrolysis to yield 2-hydroxydec-4-enoic acid due to increased electrophilicity of the carbonyl. 2-hydroxydec-4-enoic acid can then be further oxidized by poxM to yield the alpha-ketoacid 2-oxodec-4-enoicacid, which is reductively aminated by the aminotransferase poxL to yield (S,E)-2-aminodec-4-enoic acid. The Hybrid PKS-NRPS synthetase poxE then performs condensation between the octaketide product of its PKS modules and the amino group of (S,E)-2-aminodec-4-enoic acid which is activated and incorporated by the adenylation domain. The resulting aminoacyl product can be cyclized by the Diels-Alderase PoxQ and reductively released by the reductive (R) domain of poxE to yield an aldehyde intermediate. The released aldehyde is then substrate for a Knoevenagel condensation by the hydrolyase poxO followed by an oxidation at the 5-position of the pyrrolidone ring. The presence of the olefin from the amino acid building block allows for migration of the substituted allyl group to occur. This allylic transposition reaction takes place in a conjugate addition, semipinacol-like fashion to yield a succinimide intermediate. Iterative two-electron oxidations of the C7 methyl of the succinimide intermediate to the carboxylic acid can be catalyzed by one of two remaining cytochrome P450 monooxygenasess poxC or poxD to yield oxaleimide A. Subsequent oxidation yields the maleimide scaffold oxaleimide I. Both oxaleimide A and oxaleimide I can undergo oxidative modifications in the decalin ring to yield the series of products oxaleimides B to H. This Penicillium oxalicum (strain 114-2 / CGMCC 5302) (Penicillium decumbens) protein is Oxaleimides biosynthesis cluster protein N.